The primary structure comprises 789 residues: MAQQLPCVSSPRPLLAVPAGRWRAGVRGRPNVAGLGRGRLSLHAAAARPVAEAVQAEEDDDDDDEEVAEERFALGGACRVLAGMPAPLGATALRGGVNFAVYSSGASAASLCLFAPGDLKADRVTEEVPLDPLLNRTGNVWHVFIHGDQLHGMLYGYRFDGVFAPERGQYYDVSNVVVDPYAKAVVSRGEYGVPAPGGSCWPQMAGMIPLPYNKFDWQGDLPLGYHQKDLVIYEMHLRGFTKHNSSKTKHPGTYIGAVSKLDHLKELGVNCIELMPCHEFNELEYFSSSSKMNFWGYSTINFFSPMARYSSSGIRDSGCGAINEFKAFVREAHKRGIEVIMDVVFNHTAEGNEKGPILSFRGIDNSTYYMLAPKGEFYNYSGCGNTFNCNHPVVREFIVDCLRYWVTEMHVDGFRFDLASILTRGCSLWDPVNVYGSPMEGDMITTGTPLVAPPLIDMISNDPILGNVKLIAEAWDAGGLYQVGQFPHWNVWSEWNGKYRDTVRQFIKGTDGFAGAFAECLCGSPQLYQAGGRKPWHSINFVCAHDGFTLADLVTYNSKYNLSNGEDNRDGENHNLSWNCGEEGEFASLSVRRLRKRQMRNFFVCLMVSQGVPMFYMGDEYGHTKGGNNNTYCHDHYVNYFRWDKKEEQSSDLYRFCRLMTKFRKECESLGLEDFPTSERLKWHGHQPGKPDWSEASRFVAFTMKDETKGEIYVAFNTSHLPVVVGLPERSGFRWEPVVDTGKEAPYDFLTDGLPDRAVTVYQFSHFLNSNLYPMLSYSSIILVLRPDV.

The transit peptide at 1–44 (MAQQLPCVSSPRPLLAVPAGRWRAGVRGRPNVAGLGRGRLSLHA) directs the protein to the chloroplast. The Nucleophile role is filled by aspartate 417. The active-site Proton donor is glutamate 473.

Belongs to the glycosyl hydrolase 13 family.

Its subcellular location is the plastid. The protein resides in the chloroplast. It catalyses the reaction Hydrolysis of (1-&gt;6)-alpha-D-glucosidic branch linkages in glycogen, amylopectin and their beta-limit dextrins.. The protein operates within glycan biosynthesis; starch biosynthesis. In terms of biological role, isoamylase starch-debranching enzyme involved in amylopectin biosynthesis in endosperm. Functions by removing excess branches or improper branches that interfere with the formation of double helices of the cluster chains of amylopectin and crystallization of starch. The protein is Isoamylase SU1, chloroplastic of Zea mays (Maize).